Reading from the N-terminus, the 229-residue chain is Cytochrome c oxidase subunit 2 (229 aa).

The Mitochondrial intermembrane portion of the chain corresponds to 1–26; sequence MSTWANLGLQDSASPLMEQLIFFHDH. Residues 27-48 traverse the membrane as a helical segment; sequence ALLILVMITVLVGYLMFMLFFN. The Mitochondrial matrix portion of the chain corresponds to 49–62; sequence SYVNRFLLHGQLIE. A helical membrane pass occupies residues 63-82; it reads MIWTILPAIILLFIAMPSLR. The Mitochondrial intermembrane segment spans residues 83 to 229; it reads LLYLLDEINE…IKWISSTVNS (147 aa). Cu cation contacts are provided by histidine 161, cysteine 196, glutamate 198, cysteine 200, histidine 204, and methionine 207. Mg(2+) is bound at residue glutamate 198.

The protein belongs to the cytochrome c oxidase subunit 2 family. As to quaternary structure, component of the cytochrome c oxidase (complex IV, CIV), a multisubunit enzyme composed of a catalytic core of 3 subunits and several supernumerary subunits. The complex exists as a monomer or a dimer and forms supercomplexes (SCs) in the inner mitochondrial membrane with ubiquinol-cytochrome c oxidoreductase (cytochrome b-c1 complex, complex III, CIII). The cofactor is Cu cation.

It is found in the mitochondrion inner membrane. It carries out the reaction 4 Fe(II)-[cytochrome c] + O2 + 8 H(+)(in) = 4 Fe(III)-[cytochrome c] + 2 H2O + 4 H(+)(out). Its function is as follows. Component of the cytochrome c oxidase, the last enzyme in the mitochondrial electron transport chain which drives oxidative phosphorylation. The respiratory chain contains 3 multisubunit complexes succinate dehydrogenase (complex II, CII), ubiquinol-cytochrome c oxidoreductase (cytochrome b-c1 complex, complex III, CIII) and cytochrome c oxidase (complex IV, CIV), that cooperate to transfer electrons derived from NADH and succinate to molecular oxygen, creating an electrochemical gradient over the inner membrane that drives transmembrane transport and the ATP synthase. Cytochrome c oxidase is the component of the respiratory chain that catalyzes the reduction of oxygen to water. Electrons originating from reduced cytochrome c in the intermembrane space (IMS) are transferred via the dinuclear copper A center (CU(A)) of subunit 2 and heme A of subunit 1 to the active site in subunit 1, a binuclear center (BNC) formed by heme A3 and copper B (CU(B)). The BNC reduces molecular oxygen to 2 water molecules using 4 electrons from cytochrome c in the IMS and 4 protons from the mitochondrial matrix. This Drosophila lowei (Fruit fly) protein is Cytochrome c oxidase subunit 2 (mt:CoII).